A 112-amino-acid chain; its full sequence is uncharacterized protein (112 aa).

An N-terminal signal peptide occupies residues 1–29 (MINLHRLCIIHVVATLLSTLLSLISVAIS). The N-linked (GlcNAc...) asparagine glycan is linked to N84. Residues 84–112 (NLSKGYNQRPEGSKEESHMVVKEKRKGDH) are disordered. The segment covering 94–112 (EGSKEESHMVVKEKRKGDH) has biased composition (basic and acidic residues).

It localises to the secreted. This is an uncharacterized protein from Homo sapiens (Human).